Reading from the N-terminus, the 438-residue chain is Putative B3 domain-containing protein Os04g0676650 (438 aa).

A compositionally biased stretch (low complexity) spans 1-11 (MADARGSSSSS). 2 disordered regions span residues 1–30 (MADA…DFVG) and 225–285 (SSSH…MNQN). Residues 12–30 (GDGGGGEGKGGAGHGDFVG) are compositionally biased toward gly residues. The span at 258–269 (RRSDMESEKNDD) shows a compositional bias: basic and acidic residues. Polar residues predominate over residues 272-285 (DQTPVSEPPSMNQN). The segment at residues 302–404 (LRKELTNSDV…KFVVRGEKAI (103 aa)) is a DNA-binding region (TF-B3).

It is found in the nucleus. This is Putative B3 domain-containing protein Os04g0676650 from Oryza sativa subsp. japonica (Rice).